Here is a 636-residue protein sequence, read N- to C-terminus: Chaperone protein HtpG (636 aa).

Positions 1–344 are a; substrate-binding; sequence MTLEADKQTH…SADLSLNVSR (344 aa). Residues 345–561 form a b region; the sequence is EILQSGPVVD…EGDLGLQMRQ (217 aa). Residues 562–636 are c; sequence LLEASGQKVP…LNKLLLELSA (75 aa).

This sequence belongs to the heat shock protein 90 family. In terms of assembly, homodimer.

The protein resides in the cytoplasm. Molecular chaperone. Has ATPase activity. This Xylella fastidiosa (strain Temecula1 / ATCC 700964) protein is Chaperone protein HtpG.